A 665-amino-acid chain; its full sequence is Secreted LysM effector Lys3 (665 aa).

An N-terminal signal peptide occupies residues 1–19; it reads MLWLTVSLTGFALLGVVAA. 2 N-linked (GlcNAc...) asparagine glycosylation sites follow: Asn-43 and Asn-153. LysM domains lie at 166–211, 216–264, and 303–349; these read RTYT…TLCL, TLRK…YICI, and KWYV…AYCV. Asn-234 carries an N-linked (GlcNAc...) asparagine glycan. Residue Asn-398 is glycosylated (N-linked (GlcNAc...) asparagine). The LysM 4 domain maps to 409–454; that stretch reads SWSDAAKLNSCSFIAHINGVTVSQLLQWNPSLSKDSCSLSRELYYC. Asn-531 is a glycosylation site (N-linked (GlcNAc...) asparagine). Residues 585–610 form a disordered region; sequence SSVSMTNSAPATATSTGGPPAPTQDG. The segment covering 592 to 602 has biased composition (low complexity); it reads SAPATATSTGG. Residue Asn-614 is glycosylated (N-linked (GlcNAc...) asparagine). Positions 617–663 constitute a LysM 5 domain; it reads KWHVVESGDGCWAIYTKYGITSDQLFEWNTKISKDCSNIWLGYAVCV.

This sequence belongs to the secreted LysM effector family.

Functionally, might have a role in sequestration of chitin oligosaccharides (breakdown products of fungal cell walls that are released during invasion and act as triggers of host immunity) to dampen host defense. The polypeptide is Secreted LysM effector Lys3 (Pochonia chlamydosporia (strain 123) (Metacordyceps chlamydosporia)).